A 378-amino-acid chain; its full sequence is tRNA-specific 2-thiouridylase MnmA (378 aa).

ATP-binding positions include 9 to 16 (GVSGGVDS) and M35. Residues 94-96 (NPD) form an interaction with target base in tRNA region. C99 functions as the Nucleophile in the catalytic mechanism. Cysteines 99 and 195 form a disulfide. G123 is an ATP binding site. The tract at residues 145 to 147 (KDQ) is interaction with tRNA. C195 serves as the catalytic Cysteine persulfide intermediate. The segment at 307–308 (RY) is interaction with tRNA.

This sequence belongs to the MnmA/TRMU family.

Its subcellular location is the cytoplasm. It catalyses the reaction S-sulfanyl-L-cysteinyl-[protein] + uridine(34) in tRNA + AH2 + ATP = 2-thiouridine(34) in tRNA + L-cysteinyl-[protein] + A + AMP + diphosphate + H(+). Catalyzes the 2-thiolation of uridine at the wobble position (U34) of tRNA, leading to the formation of s(2)U34. This chain is tRNA-specific 2-thiouridylase MnmA, found in Xanthomonas axonopodis pv. citri (strain 306).